The chain runs to 374 residues: Succinyl-diaminopimelate desuccinylase (374 aa).

His-66 lines the Zn(2+) pocket. Asp-68 is an active-site residue. Asp-99 provides a ligand contact to Zn(2+). Glu-133 serves as the catalytic Proton acceptor. Residues Glu-134, Glu-162, and His-348 each contribute to the Zn(2+) site.

It belongs to the peptidase M20A family. DapE subfamily. As to quaternary structure, homodimer. Requires Zn(2+) as cofactor. Co(2+) is required as a cofactor.

The enzyme catalyses N-succinyl-(2S,6S)-2,6-diaminopimelate + H2O = (2S,6S)-2,6-diaminopimelate + succinate. The protein operates within amino-acid biosynthesis; L-lysine biosynthesis via DAP pathway; LL-2,6-diaminopimelate from (S)-tetrahydrodipicolinate (succinylase route): step 3/3. Its function is as follows. Catalyzes the hydrolysis of N-succinyl-L,L-diaminopimelic acid (SDAP), forming succinate and LL-2,6-diaminopimelate (DAP), an intermediate involved in the bacterial biosynthesis of lysine and meso-diaminopimelic acid, an essential component of bacterial cell walls. In Coxiella burnetii (strain CbuK_Q154) (Coxiella burnetii (strain Q154)), this protein is Succinyl-diaminopimelate desuccinylase.